We begin with the raw amino-acid sequence, 581 residues long: Ketol-acid reductoisomerase, chloroplastic (581 aa).

The N-terminal 50 residues, M1–V50, are a transit peptide targeting the chloroplast. Residues V92 to T290 enclose the KARI N-terminal Rossmann domain. NADP(+) contacts are provided by residues G113 to Q120, R146 to S151, and S185 to Q189. H210 is a catalytic residue. 2 consecutive KARI C-terminal knotted domains span residues T291–G439 and D440–L576. D299, E303, E476, and E480 together coordinate Mg(2+). S502 is a binding site for substrate.

Belongs to the ketol-acid reductoisomerase family. In terms of assembly, homodimer. The cofactor is Mg(2+).

Its subcellular location is the plastid. The protein localises to the chloroplast. The enzyme catalyses (2R)-2,3-dihydroxy-3-methylbutanoate + NADP(+) = (2S)-2-acetolactate + NADPH + H(+). It carries out the reaction (2R,3R)-2,3-dihydroxy-3-methylpentanoate + NADP(+) = (S)-2-ethyl-2-hydroxy-3-oxobutanoate + NADPH + H(+). The protein operates within amino-acid biosynthesis; L-isoleucine biosynthesis; L-isoleucine from 2-oxobutanoate: step 2/4. Its pathway is amino-acid biosynthesis; L-valine biosynthesis; L-valine from pyruvate: step 2/4. The sequence is that of Ketol-acid reductoisomerase, chloroplastic (PGAAIR) from Pisum sativum (Garden pea).